A 494-amino-acid polypeptide reads, in one-letter code: Glycerol kinase (494 aa).

Threonine 12 serves as a coordination point for ADP. 3 residues coordinate ATP: threonine 12, threonine 13, and serine 14. Threonine 12 provides a ligand contact to sn-glycerol 3-phosphate. Residue arginine 16 coordinates ADP. 4 residues coordinate sn-glycerol 3-phosphate: arginine 82, glutamate 83, tyrosine 134, and aspartate 244. Arginine 82, glutamate 83, tyrosine 134, aspartate 244, and glutamine 245 together coordinate glycerol. Residues threonine 266 and glycine 309 each coordinate ADP. The ATP site is built by threonine 266, glycine 309, glutamine 313, and glycine 410. Residues glycine 410 and asparagine 414 each contribute to the ADP site.

It belongs to the FGGY kinase family. Homotetramer and homodimer (in equilibrium).

The enzyme catalyses glycerol + ATP = sn-glycerol 3-phosphate + ADP + H(+). The protein operates within polyol metabolism; glycerol degradation via glycerol kinase pathway; sn-glycerol 3-phosphate from glycerol: step 1/1. Its activity is regulated as follows. Activated by phosphorylation and inhibited by fructose 1,6-bisphosphate (FBP). Its function is as follows. Key enzyme in the regulation of glycerol uptake and metabolism. Catalyzes the phosphorylation of glycerol to yield sn-glycerol 3-phosphate. This is Glycerol kinase from Desulfitobacterium hafniense (strain DSM 10664 / DCB-2).